The primary structure comprises 263 residues: Probable septum site-determining protein MinC (263 aa).

The tract at residues 107–159 (LPPSGARERPLDIKDSAPRKPAEEPSPSAGEARPEPAKAEEKPADPVSRPTKV) is disordered. 2 stretches are compositionally biased toward basic and acidic residues: residues 112–129 (ARER…KPAE) and 138–150 (ARPE…EKPA).

It belongs to the MinC family. Interacts with MinD and FtsZ.

In terms of biological role, cell division inhibitor that blocks the formation of polar Z ring septums. Rapidly oscillates between the poles of the cell to destabilize FtsZ filaments that have formed before they mature into polar Z rings. Prevents FtsZ polymerization. This chain is Probable septum site-determining protein MinC, found in Pseudomonas aeruginosa (strain UCBPP-PA14).